A 699-amino-acid polypeptide reads, in one-letter code: MTTITEKRLTFAFPEDYYVTKYDEWEHYKIFQNSCNLRNKIDTNEKGKNGINQSVDDDNGSSGVDIIALHESTLWLIEIKDYYRLGLEPNAQSIDEKLSDLPYLIARKIRDSLAGLVSAKFKAEKQEEKDFSRLALDCNEIKIVLHIEMPSIRSKLYPSSSDLANLLKDKFKLSEFTKNFANCYAEPIFTNISHINNPQLRNVPWSVSTGTEQKLSSEQQRLIHNPMTTIYNTLTRQKEPFAPIDPKNVRMYVCGMTVYDYCHLGHARVMVVFDMIARWLRECGYPLTYVRNITDIDDKIIARAAENGETIGELTARFIQAMHEDADALGVLRPDIEPKATENIPQMIAMIETLIQNGKAYPAANGDVYYAVREFSAYGQLSGKSLDDLRAGERVEVDGFKRDPLDFVLWKAAKAGEPAWESPWGNGRPGWHIECSAMSENLFGNTFDIHGGGADLQFPHHENEIAQSVGATGHTCGHHHAQTHHGQSIASHVKYWLHNGFIRVDGEKMSKSLGNFFTIREVLKQYDPEVVRFFILRAHYRSPLNYSDAHLDDAKGALTRLYTTLKNTPAAEFDLSENVNDYTRRFYAAMNDDFGTVEAVAVLFELAGEVNKTNDAQLAGCLKALGGIIGLLQRDPTEFLQGGAASDGLSNEEIEDLIARRKQARADKNWAESDRIRDLLNEHKIILEDNAGGTTWRRG.

The segment at 1-226 is unknown; that stretch reads MTTITEKRLT…SEQQRLIHNP (226 aa). C254 contributes to the Zn(2+) binding site. A 'HIGH' region motif is present at residues 256 to 266; sequence MTVYDYCHLGH. The Zn(2+) site is built by C435, H460, and E464. Residues 508 to 512 carry the 'KMSKS' region motif; the sequence is KMSKS. K511 is a binding site for ATP.

It belongs to the class-I aminoacyl-tRNA synthetase family. In terms of assembly, monomer. Zn(2+) is required as a cofactor.

It is found in the cytoplasm. It catalyses the reaction tRNA(Cys) + L-cysteine + ATP = L-cysteinyl-tRNA(Cys) + AMP + diphosphate. This chain is Cysteine--tRNA ligase (cysS), found in Neisseria meningitidis serogroup A / serotype 4A (strain DSM 15465 / Z2491).